The sequence spans 202 residues: Small ribosomal subunit protein uS4c (202 aa).

Residues 90–153 enclose the S4 RNA-binding domain; it reads MRLDNVIFRL…KSETIISKNI (64 aa).

It belongs to the universal ribosomal protein uS4 family. As to quaternary structure, part of the 30S ribosomal subunit. Contacts protein S5. The interaction surface between S4 and S5 is involved in control of translational fidelity.

It is found in the plastid. The protein localises to the chloroplast. One of the primary rRNA binding proteins, it binds directly to 16S rRNA where it nucleates assembly of the body of the 30S subunit. Functionally, with S5 and S12 plays an important role in translational accuracy. The sequence is that of Small ribosomal subunit protein uS4c (rps4) from Sphaerocarpos donnelli (Liverwort).